We begin with the raw amino-acid sequence, 205 residues long: MRPDTSRDPVAGPDSGPEPPFPIRLAGPVIKGFGRGSKELGIPTANIPADGLAEYPDLQVGVYYGVVALNPAQSEVPSTSAQILPAVLSIGYNPFYKNTTRSIEIHIMPPLTAPSPTATGTPGHVTFHKLPDFYGTSLKLLILGYIRPEYDYVSAEALIEDIRVDCEVARRSLQRGAYVRYLGAGADENEENEEVQEQRRWLTTF.

Residues 1-24 (MRPDTSRDPVAGPDSGPEPPFPIR) are disordered. Thr-44 and Asn-46 together coordinate Mg(2+). Catalysis depends on Glu-104, which acts as the Nucleophile.

The protein belongs to the flavokinase family. Zn(2+) is required as a cofactor. Mg(2+) serves as cofactor.

The enzyme catalyses riboflavin + ATP = FMN + ADP + H(+). The protein operates within cofactor biosynthesis; FMN biosynthesis; FMN from riboflavin (ATP route): step 1/1. Catalyzes the phosphorylation of riboflavin (vitamin B2) to form flavin mononucleotide (FMN) coenzyme. The protein is Riboflavin kinase (fmn1) of Aspergillus terreus (strain NIH 2624 / FGSC A1156).